A 211-amino-acid chain; its full sequence is Uridine kinase (211 aa).

13-20 (GGSGSGKT) is a binding site for ATP.

This sequence belongs to the uridine kinase family.

The protein resides in the cytoplasm. It catalyses the reaction uridine + ATP = UMP + ADP + H(+). It carries out the reaction cytidine + ATP = CMP + ADP + H(+). It functions in the pathway pyrimidine metabolism; CTP biosynthesis via salvage pathway; CTP from cytidine: step 1/3. Its pathway is pyrimidine metabolism; UMP biosynthesis via salvage pathway; UMP from uridine: step 1/1. This Lactobacillus johnsonii (strain CNCM I-12250 / La1 / NCC 533) protein is Uridine kinase.